Consider the following 438-residue polypeptide: Putative pectate lyase 14 (438 aa).

An N-terminal signal peptide occupies residues methionine 1 to alanine 26. Residues asparagine 40, asparagine 46, and asparagine 73 are each glycosylated (N-linked (GlcNAc...) asparagine). Residues aspartate 236, aspartate 260, and aspartate 264 each contribute to the Ca(2+) site. Arginine 316 is an active-site residue.

It belongs to the polysaccharide lyase 1 family. The cofactor is Ca(2+).

The catalysed reaction is Eliminative cleavage of (1-&gt;4)-alpha-D-galacturonan to give oligosaccharides with 4-deoxy-alpha-D-galact-4-enuronosyl groups at their non-reducing ends.. It functions in the pathway glycan metabolism; pectin degradation; 2-dehydro-3-deoxy-D-gluconate from pectin: step 2/5. The protein is Putative pectate lyase 14 of Arabidopsis thaliana (Mouse-ear cress).